The primary structure comprises 279 residues: Putative pyruvate, phosphate dikinase regulatory protein (279 aa).

An ADP-binding site is contributed by 153–160 (GVSRTSKT).

This sequence belongs to the pyruvate, phosphate/water dikinase regulatory protein family. PDRP subfamily.

The catalysed reaction is N(tele)-phospho-L-histidyl/L-threonyl-[pyruvate, phosphate dikinase] + ADP = N(tele)-phospho-L-histidyl/O-phospho-L-threonyl-[pyruvate, phosphate dikinase] + AMP + H(+). It carries out the reaction N(tele)-phospho-L-histidyl/O-phospho-L-threonyl-[pyruvate, phosphate dikinase] + phosphate + H(+) = N(tele)-phospho-L-histidyl/L-threonyl-[pyruvate, phosphate dikinase] + diphosphate. Its function is as follows. Bifunctional serine/threonine kinase and phosphorylase involved in the regulation of the pyruvate, phosphate dikinase (PPDK) by catalyzing its phosphorylation/dephosphorylation. The sequence is that of Putative pyruvate, phosphate dikinase regulatory protein from Rhodopseudomonas palustris (strain BisB5).